Here is a 112-residue protein sequence, read N- to C-terminus: uncharacterized protein (112 aa).

2 N-linked (GlcNAc...) asparagine; by host glycosylation sites follow: Asn-29 and Asn-60. Residues 66-86 (IFNGLGFILIVIFIYLLLITL) traverse the membrane as a helical segment.

Belongs to the asfivirus B117L family.

The protein localises to the host membrane. It is found in the virion. This is an uncharacterized protein from Ornithodoros (relapsing fever ticks).